A 111-amino-acid chain; its full sequence is Large ribosomal subunit protein uL22 (111 aa).

It belongs to the universal ribosomal protein uL22 family. Part of the 50S ribosomal subunit.

Its function is as follows. This protein binds specifically to 23S rRNA; its binding is stimulated by other ribosomal proteins, e.g. L4, L17, and L20. It is important during the early stages of 50S assembly. It makes multiple contacts with different domains of the 23S rRNA in the assembled 50S subunit and ribosome. Functionally, the globular domain of the protein is located near the polypeptide exit tunnel on the outside of the subunit, while an extended beta-hairpin is found that lines the wall of the exit tunnel in the center of the 70S ribosome. The sequence is that of Large ribosomal subunit protein uL22 from Geobacter sulfurreducens (strain ATCC 51573 / DSM 12127 / PCA).